A 542-amino-acid polypeptide reads, in one-letter code: Chaperonin GroEL (542 aa).

Residues 29–32, 86–90, glycine 413, 477–479, and aspartate 493 each bind ATP; these read TLGP, DGTTT, and NAA.

Belongs to the chaperonin (HSP60) family. As to quaternary structure, forms a cylinder of 14 subunits composed of two heptameric rings stacked back-to-back. Interacts with the co-chaperonin GroES.

Its subcellular location is the cytoplasm. The enzyme catalyses ATP + H2O + a folded polypeptide = ADP + phosphate + an unfolded polypeptide.. In terms of biological role, together with its co-chaperonin GroES, plays an essential role in assisting protein folding. The GroEL-GroES system forms a nano-cage that allows encapsulation of the non-native substrate proteins and provides a physical environment optimized to promote and accelerate protein folding. This chain is Chaperonin GroEL, found in Beutenbergia cavernae (strain ATCC BAA-8 / DSM 12333 / CCUG 43141 / JCM 11478 / NBRC 16432 / NCIMB 13614 / HKI 0122).